We begin with the raw amino-acid sequence, 258 residues long: UPF0758 protein Bcep1808_2579 (258 aa).

One can recognise an MPN domain in the interval 136–258 (PIDSPGAVED…TFSFARAGWL (123 aa)). Residues His-207, His-209, and Asp-220 each coordinate Zn(2+). A JAMM motif motif is present at residues 207–220 (HNHPSGAVQPSAED).

The protein belongs to the UPF0758 family.

The sequence is that of UPF0758 protein Bcep1808_2579 from Burkholderia vietnamiensis (strain G4 / LMG 22486) (Burkholderia cepacia (strain R1808)).